Consider the following 452-residue polypeptide: Bifunctional protein GlmU (452 aa).

Positions Met-1–Arg-226 are pyrophosphorylase. Residues Leu-8–Gly-11, Lys-22, Gln-73, Gly-78–Thr-79, Tyr-100–Asp-102, Gly-137, Glu-151, Asn-166, and Asn-224 each bind UDP-N-acetyl-alpha-D-glucosamine. Asp-102 serves as a coordination point for Mg(2+). A Mg(2+)-binding site is contributed by Asn-224. Residues Ala-227 to Gln-247 are linker. The interval Gly-248–Lys-452 is N-acetyltransferase. UDP-N-acetyl-alpha-D-glucosamine is bound by residues Arg-330 and Lys-348. His-360 serves as the catalytic Proton acceptor. 2 residues coordinate UDP-N-acetyl-alpha-D-glucosamine: Tyr-363 and Asn-374. Residues Ala-377, Asn-383–Tyr-384, Ser-402, Ala-420, and Arg-437 each bind acetyl-CoA.

It in the N-terminal section; belongs to the N-acetylglucosamine-1-phosphate uridyltransferase family. This sequence in the C-terminal section; belongs to the transferase hexapeptide repeat family. As to quaternary structure, homotrimer. The cofactor is Mg(2+).

The protein resides in the cytoplasm. It catalyses the reaction alpha-D-glucosamine 1-phosphate + acetyl-CoA = N-acetyl-alpha-D-glucosamine 1-phosphate + CoA + H(+). The enzyme catalyses N-acetyl-alpha-D-glucosamine 1-phosphate + UTP + H(+) = UDP-N-acetyl-alpha-D-glucosamine + diphosphate. The protein operates within nucleotide-sugar biosynthesis; UDP-N-acetyl-alpha-D-glucosamine biosynthesis; N-acetyl-alpha-D-glucosamine 1-phosphate from alpha-D-glucosamine 6-phosphate (route II): step 2/2. It functions in the pathway nucleotide-sugar biosynthesis; UDP-N-acetyl-alpha-D-glucosamine biosynthesis; UDP-N-acetyl-alpha-D-glucosamine from N-acetyl-alpha-D-glucosamine 1-phosphate: step 1/1. It participates in bacterial outer membrane biogenesis; LPS lipid A biosynthesis. Functionally, catalyzes the last two sequential reactions in the de novo biosynthetic pathway for UDP-N-acetylglucosamine (UDP-GlcNAc). The C-terminal domain catalyzes the transfer of acetyl group from acetyl coenzyme A to glucosamine-1-phosphate (GlcN-1-P) to produce N-acetylglucosamine-1-phosphate (GlcNAc-1-P), which is converted into UDP-GlcNAc by the transfer of uridine 5-monophosphate (from uridine 5-triphosphate), a reaction catalyzed by the N-terminal domain. The chain is Bifunctional protein GlmU from Aliivibrio fischeri (strain ATCC 700601 / ES114) (Vibrio fischeri).